Reading from the N-terminus, the 356-residue chain is Phosphoribosylformylglycinamidine cyclo-ligase (356 aa).

Belongs to the AIR synthase family.

It is found in the cytoplasm. The catalysed reaction is 2-formamido-N(1)-(5-O-phospho-beta-D-ribosyl)acetamidine + ATP = 5-amino-1-(5-phospho-beta-D-ribosyl)imidazole + ADP + phosphate + H(+). It functions in the pathway purine metabolism; IMP biosynthesis via de novo pathway; 5-amino-1-(5-phospho-D-ribosyl)imidazole from N(2)-formyl-N(1)-(5-phospho-D-ribosyl)glycinamide: step 2/2. In Desulfotalea psychrophila (strain LSv54 / DSM 12343), this protein is Phosphoribosylformylglycinamidine cyclo-ligase.